The sequence spans 147 residues: Small ribosomal subunit protein bS16m (147 aa).

Belongs to the bacterial ribosomal protein bS16 family. In terms of assembly, component of the mitochondrial ribosome small subunit (28S) which comprises a 12S rRNA and about 30 distinct proteins.

It localises to the mitochondrion. In Caenorhabditis elegans, this protein is Small ribosomal subunit protein bS16m (mrps-16).